Consider the following 505-residue polypeptide: Outer capsid protein VP5 (505 aa).

The tract at residues 1-42 (MGKFTSFLKRAGSATKKALTSDAAKRMYKMAGKTLQKVVESE) is involved in membrane permeabilization.

Belongs to the orbivirus VP5 family.

It localises to the virion. Its function is as follows. VP5 protein is one of the two proteins (with VP2) which constitute the virus particle outer capsid. Acts as a membrane permeabilization protein that mediates release of viral particles from endosomal compartments into the cytoplasm. Permeabilization activity is probably negatively regulated by VP2 and is triggered by endosomal degradation of VP2 and exposure to low pH. This chain is Outer capsid protein VP5 (Segment-6), found in African horse sickness virus 9 (AHSV-9).